The sequence spans 242 residues: Probable transcriptional regulatory protein Bcen2424_2294 (242 aa).

The protein belongs to the TACO1 family.

It is found in the cytoplasm. This chain is Probable transcriptional regulatory protein Bcen2424_2294, found in Burkholderia cenocepacia (strain HI2424).